Consider the following 315-residue polypeptide: 4-diphosphocytidyl-2-C-methyl-D-erythritol kinase (315 aa).

Lys-26 is an active-site residue. 111 to 121 (PLAGGLAGGSA) is a binding site for ATP. Asp-153 is an active-site residue.

It belongs to the GHMP kinase family. IspE subfamily.

The catalysed reaction is 4-CDP-2-C-methyl-D-erythritol + ATP = 4-CDP-2-C-methyl-D-erythritol 2-phosphate + ADP + H(+). The protein operates within isoprenoid biosynthesis; isopentenyl diphosphate biosynthesis via DXP pathway; isopentenyl diphosphate from 1-deoxy-D-xylulose 5-phosphate: step 3/6. Catalyzes the phosphorylation of the position 2 hydroxy group of 4-diphosphocytidyl-2C-methyl-D-erythritol. This chain is 4-diphosphocytidyl-2-C-methyl-D-erythritol kinase, found in Salinispora tropica (strain ATCC BAA-916 / DSM 44818 / JCM 13857 / NBRC 105044 / CNB-440).